Here is a 2185-residue protein sequence, read N- to C-terminus: MSAFKGSTTAKFVGRGNEYPTQANSFAQVAQQLLNSKKVDEIDEMMGFPRFIPSPALSDSKVGWLSNMHPTIISQEMLEEEGNLHSATVSGISGVDFYFIDEEGGSFKTTVTYDPYFFVSCTDETRIHDIEEYLKKTLEQCIKKVELVLKDDLAMNNHLVGLKKHLIKLSFSNSNQLFEARRILRPILKINEDENGKKDIYNTGSDYSTRDVKTLIEDIREYDVPYHVRVSIDKNIRVGKWYAVSAQGLVELEEKVTFADPVVLAFDIETTKAPLKFPDSAIDQIMMISYMIDGEGFLITNREIISEDIEDFEYTPKDEYKGQFAIFNEPDEMALLQRFFEHIRDVRPTVISTFNGDFFDWPFVENRAKFHGLNMFDEIGFAPDSEGEYKSSYCTHMDCFRWVKRDSYLPQGSQGLKAVTQAKLGYNPLELDPELMTPYAYEKPQILSEYSVSDAVATYYLYMKYVHPFIFSLCTIIPLNPDEVLRKGTGTLCEMLLMVQAYQNSVLLPNKHTDPIERFYDGHLLESETYVGGHVESLEAGVFRSDLKNDFKIDPTVIDILLEDLPYALKFCIEVENNGNMEDVTNFEEIKQQITAQLTDLKINNKRNELPLIYHVDVASMYPNIMTTNRLQPDSMKDEKDCASCDFNRPGKSCDRRLKWAWRGEFFPAKMDEYGMVKRALQNELFPNKNPKSKKQFLTFEELSYSDQVSHIKKRLTDYSRKVYHRVKVTETVEREAIVCQRENPFYVNTVRSFRDRRYEFKGLAKLWKGKLSKIKPDDVHSKDEAKKMIVLYDSLQLAHKVILNSFYGYVMRKGSRWYSMEMAGITCLTGANIIQMARSVVERIGRPLELDTDGIWCILPKSFPENFEIKLRNGKKLFLSYPCSMLNYKVHQKYTNHQYQDLVDPMKFKYQTKSDNSIFFEVDGPYKAMILPTSKEEGKGIKKRYAVFNEDGSLAELKGFELKRRGELQLIKNFQSDIFKLFLEGTTLESCYAAVATVANRWLDVLDSKGAMLETEDLIELICENKSMSKTLKEYQGQKSTSITTARRLGEFLGEAMVKDAGLQCKFIISSKPHNAPVTERAIPVAIFSSDLHVKRTFLRRWLLDSSLNDFDPRAIIDWDYYRERLASVVQKIITIPAALQNIKNPVPRVEHPDWLRKKIAVSEDKFKQTSLNRFFKSTKAPPEVKDIEDSFDEHSANKSRIAKVTYKRKSKRRNGDTALEEESLLLPSEMPPMLDDYVGWLQYQKTKWKIQHIDRKKREKLFGKTSRASDRSALGNLIRKHVESYADKSWEILQCKPSIDLGVVEIYALIDRKIQLLKVNIPKTVLMNFKTENFPSGGIENCIVEKSNAELPNVKGINNESSSQLFKLTMSEDTYFNEVNKASSVLNNENVLGIYESSISSNERVIMRLGTCIQFSSEKMGALGKGLQNGFHMKNLHPVEADRYLQRFDLDIAYLLHFVTDIGYEFYFLYKAWEDVVEIFVLKPSTHAQEVSNKAIESLYNEIYEKKFEKLDKYYDLIKINKNVSFNVNDYTELKRLLKDLSKMLQNIKEEKGSHTMVILQSPYTHRVAKLLQPLNAFPVVEIATAETHLPALNWQGQLMRKAVNHILSLGSWISNLITLSKYSNIPICNLKVDNLGYIIDLMYARQLKKNNIVLWWNDKSPLPDHGGVERDFDPRKAELMTDLVFPIMNNPDIYDDVIFEISVYNSVVNTVLSSTMLNEAEGTDLAQNSTSKEESFGFVEDSFSSSALSVLRALLKELWDDALGDNITADSLVHAFIGWVYNPDAKLFDYALRYHIHTLTQKAVLQLINEFKLAGSSLIFADRNKLLIKTQKRSVENSYAYGQYLMKAIRSKPMFAYLDLKIDRYWDVLIWMDKYNYGGRACLQIEDKEVQSFQAYSHWHIKDFLPAIYQQEFDDWLVVILDSMVKTKEAYHERNASTQRLTQLPKNTLADSDVDSQTDSLGGFTHNFSKALIKRAEKLYKNQQEYILDPNFGKDYLSPTIPGSHLVVKNPLLELVKYLSHILSLSSNHLLEGRALRKELLKTFEIREFDRLAEFKDPSTSFVIPSFICEHCSYISDIDICRESMERVFICQSCNRSLNKNLIEEHVIERLQAQVASFITQDVKCNKCHKIKEDAMSPYCPCSGKWELAVSKESFMAQLQIFKNLAESFDFRTLKETLNDFL.

Zn(2+) is bound by residues cysteine 2072, cysteine 2075, cysteine 2094, and cysteine 2097. The CysA-type zinc-finger motif lies at 2072–2097; it reads CEHCSYISDIDICRESMERVFICQSC. The [4Fe-4S] cluster site is built by cysteine 2128, cysteine 2131, cysteine 2143, and cysteine 2145. Positions 2128–2145 match the CysB motif motif; the sequence is CNKCHKIKEDAMSPYCPC.

This sequence belongs to the DNA polymerase type-B family. As to quaternary structure, heterotetramer. Consists of 4 subunits: POL2, DPB2, DPB3 and DPB4. The cofactor is [4Fe-4S] cluster.

It localises to the nucleus. The enzyme catalyses DNA(n) + a 2'-deoxyribonucleoside 5'-triphosphate = DNA(n+1) + diphosphate. In terms of biological role, DNA polymerase II participates in chromosomal DNA replication. This Kluyveromyces lactis (strain ATCC 8585 / CBS 2359 / DSM 70799 / NBRC 1267 / NRRL Y-1140 / WM37) (Yeast) protein is DNA polymerase epsilon catalytic subunit A (POL2).